Consider the following 540-residue polypeptide: Membrane protein insertase YidC (540 aa).

Residues 6–26 (NILLIALALVSFLLFQQWQVA) traverse the membrane as a helical segment. The disordered stretch occupies residues 36 to 63 (QAQSSSTLPAPSFADELDPVPGQQQASA). The next 4 helical transmembrane spans lie at 342-362 (AFIQ…TFIV), 417-437 (LGGC…YWAL), 455-475 (LSAQ…MFLI), and 496-516 (PVMF…YWLV).

This sequence belongs to the OXA1/ALB3/YidC family. Type 1 subfamily. In terms of assembly, interacts with the Sec translocase complex via SecD. Specifically interacts with transmembrane segments of nascent integral membrane proteins during membrane integration.

It is found in the cell inner membrane. Its function is as follows. Required for the insertion and/or proper folding and/or complex formation of integral membrane proteins into the membrane. Involved in integration of membrane proteins that insert both dependently and independently of the Sec translocase complex, as well as at least some lipoproteins. Aids folding of multispanning membrane proteins. In Vibrio campbellii (strain ATCC BAA-1116), this protein is Membrane protein insertase YidC.